The primary structure comprises 347 residues: GMP reductase (347 aa).

Residue A108–A131 participates in NADP(+) binding. G181 and G183 together coordinate K(+). Residue C186 is the Thioimidate intermediate of the active site. I216–V239 serves as a coordination point for NADP(+).

It belongs to the IMPDH/GMPR family. GuaC type 1 subfamily. In terms of assembly, homotetramer.

It catalyses the reaction IMP + NH4(+) + NADP(+) = GMP + NADPH + 2 H(+). Its function is as follows. Catalyzes the irreversible NADPH-dependent deamination of GMP to IMP. It functions in the conversion of nucleobase, nucleoside and nucleotide derivatives of G to A nucleotides, and in maintaining the intracellular balance of A and G nucleotides. This is GMP reductase from Yersinia pestis bv. Antiqua (strain Antiqua).